A 261-amino-acid polypeptide reads, in one-letter code: MAAMKRLLASSLLILLSGCSLMQPPIESAETIQGTTTVDAVEGDKSESNSGLTDALRNRTDPVAGDPAWAPIHPKGKPEHYAAETGSLFNLASSSSMYDDSKPRGVGDIITVTLNESTKAAKSADADLNKKNDASMDPLAVGGKDLTIGDYNFSYALKNDNKFSGSAAANQSNSMSGSITVEVIEVLANGNLVIRGEKWLTLNTGDEYIRLSGTIRPDDIDFDNTIASNRISNARIQYSGTGTNQDMQEPGFLARFFNVSL.

Residues M1 to G18 form the signal peptide. C19 is lipidated: N-palmitoyl cysteine. C19 carries the S-diacylglycerol cysteine lipid modification. The interval T37 to P67 is disordered.

Belongs to the FlgH family. The basal body constitutes a major portion of the flagellar organelle and consists of four rings (L,P,S, and M) mounted on a central rod.

Its subcellular location is the cell outer membrane. The protein localises to the bacterial flagellum basal body. Assembles around the rod to form the L-ring and probably protects the motor/basal body from shearing forces during rotation. The protein is Flagellar L-ring protein of Vibrio cholerae serotype O1 (strain ATCC 39541 / Classical Ogawa 395 / O395).